A 244-amino-acid chain; its full sequence is MALISTRRTLSTLLNKTLSSSTSYSSSFPTLSSRSRFAMPLIEKVSSSRTSLGPCYISTRPKTSGSGYSPLNDPSPNWSNRPPKETILLDGCDYEHWLIVMEFTDPKPTEEEMINSYVKTLTSVLGCEEEAKKKIYSVCTSTYTGFGALISEELSCKVKALPGVLWVLPDSYLDVPNKDYGGDLYVEGKVIPRPQYRFTEQRHTRPRPRPRYDRRRETMQVERREPSMGLHSPVNPGEFNKPSA.

Residues Met-1–Lys-62 constitute a mitochondrion transit peptide. Disordered regions lie at residues Thr-59–Pro-82 and Tyr-196–Ala-244. Residues Arg-60–Asn-80 show a composition bias toward polar residues. The span at Pro-210–Pro-226 shows a compositional bias: basic and acidic residues.

This sequence belongs to the MORF family. As to quaternary structure, heterodimer with MORF1. Homodimer and heterodimers with MORF8/RIP1, MORF4/RIP4 and MORF5/RIP5.

It localises to the mitochondrion. Involved in organellar RNA editing. Required for the processing of RNA editing sites in mitochondria. The sequence is that of Multiple organellar RNA editing factor 3, mitochondrial from Arabidopsis thaliana (Mouse-ear cress).